Here is a 635-residue protein sequence, read N- to C-terminus: Surface protein F (635 aa).

A signal peptide spans 1-37 (MAKYRGKPFQLYVKLSCSTMMATSIILTNILPYDAQA). Composition is skewed to basic and acidic residues over residues 101–112 (NELDSKDNKSSH) and 193–202 (KSKDASKDTS). Disordered stretches follow at residues 101 to 122 (NELD…SDID) and 192 to 228 (HKSK…SGHV). The LPXTG sorting signal signature appears at 597–601 (LPKAG). The residue at position 600 (alanine 600) is a Pentaglycyl murein peptidoglycan amidated alanine. A propeptide spans 601-635 (GETIKEHWLPISVIVGAMGVLMIWLSRRNKLKNKA) (removed by sortase).

Its subcellular location is the secreted. It is found in the cell wall. The sequence is that of Surface protein F from Staphylococcus aureus (strain NCTC 8325 / PS 47).